Consider the following 732-residue polypeptide: Sesterbrasiliatriene synthase PbSS (732 aa).

Residues 1 to 342 are terpene cyclase; sequence MDFLSGAFHY…SRYHRDDLIT (342 aa). Residues Asp-105 and Asp-109 each contribute to the Mg(2+) site. Residues Asp-105, Asp-109, 193-196, 242-246, and 334-335 each bind substrate; these read RLSE, FNKEF, and RY. A DDXXD 1 motif is present at residues 105 to 109; sequence DDVTD. The NSE/DTE motif lies at 238–246; that stretch reads DYYSFNKEF. Positions 343–732 are prenyltransferase; the sequence is TAGDRAMIVG…ARILLLGLGL (390 aa). Disordered regions lie at residues 371 to 390 and 398 to 420; these read KSAT…WSDS and ACYT…HKAN. The span at 411-420 shows a compositional bias: basic and acidic residues; the sequence is NGTEAGHKAN. Residues Lys-453, Arg-456, and His-485 each coordinate isopentenyl diphosphate. 2 residues coordinate Mg(2+): Asp-492 and Asp-496. Residues 492-496 carry the DDXXD 2 motif; sequence DDIED. Arg-501 lines the dimethylallyl diphosphate pocket. Arg-502 is a binding site for isopentenyl diphosphate. Dimethylallyl diphosphate is bound by residues Lys-579, Thr-580, Gln-615, Asn-622, Lys-632, and Lys-642.

In the N-terminal section; belongs to the terpene synthase family. It in the C-terminal section; belongs to the FPP/GGPP synthase family. In terms of assembly, hexamer. Mg(2+) is required as a cofactor.

It carries out the reaction isopentenyl diphosphate + (2E,6E)-farnesyl diphosphate = (2E,6E,10E)-geranylgeranyl diphosphate + diphosphate. The catalysed reaction is isopentenyl diphosphate + (2E,6E,10E)-geranylgeranyl diphosphate = (2E,6E,10E,14E)-geranylfarnesyl diphosphate + diphosphate. Its pathway is secondary metabolite biosynthesis; terpenoid biosynthesis. In terms of biological role, bifunctional sesterterpene synthase that possesses both prenyl transferase and terpene cyclase activity, converting isopentenyl diphosphate and dimethylallyl diphosphate into geranylfarnesyl diphosphate (GFPP) and further converting GFPP into sesterbrasiliatriene. The protein is Sesterbrasiliatriene synthase PbSS (PbSS) of Penicillium brasilianum.